A 228-amino-acid polypeptide reads, in one-letter code: Ankyrin repeat domain-containing protein 46 (228 aa).

ANK repeat units lie at residues 11–40, 44–73, 77–103, and 107–138; these read QTNV…DPNI, RGRT…DLLA, QGNT…KIDI, and QGAT…EVKG. The chain crosses the membrane as a helical span at residues 195-215; that stretch reads VLLLIFVIALLSLGIAYYVSG.

It localises to the membrane. The sequence is that of Ankyrin repeat domain-containing protein 46 (ANKRD46) from Pongo abelii (Sumatran orangutan).